The chain runs to 1588 residues: Centrosomal protein of 170 kDa (1588 aa).

Residues 23 to 73 enclose the FHA domain; it reads IFVGRDDCELMLQSRSVDKQHAVINYDASMDEHLVKDLGSLNGTFVNDVRI. Disordered stretches follow at residues 121–172, 299–323, 338–447, and 461–508; these read LSQK…MPRG, KFTS…GIQT, QNNP…EEPS, and SGSL…NPNS. A Phosphoserine modification is found at Ser-141. Basic and acidic residues predominate over residues 155-164; sequence EALKSEEKPM. The segment covering 347–357 has biased composition (basic and acidic residues); it reads ERTEEDSKSIK. Phosphoserine occurs at positions 355 and 358. At Tyr-363 the chain carries Phosphotyrosine. Residues 407–418 show a composition bias toward basic and acidic residues; that stretch reads KKKAQSTEKHQE. Phosphoserine occurs at positions 443, 463, and 494. Residue Thr-498 is modified to Phosphothreonine. Phosphoserine is present on residues Ser-568, Ser-577, Ser-628, and Ser-631. Residues 602-854 are disordered; that stretch reads ELSATVENET…PHINKQNSSV (253 aa). A compositionally biased stretch (polar residues) spans 620-631; the sequence is LRSTSCTTSLAS. Phosphothreonine is present on Thr-639. The span at 645–654 shows a compositional bias: basic and acidic residues; sequence NEEKLLESSR. The residue at position 662 (Ser-662) is a Phosphoserine. Basic and acidic residues predominate over residues 663–691; sequence EIGEKQDTELQEKEAQVYQSEKHDADRGL. Ser-718 bears the Phosphoserine mark. The segment covering 720–731 has biased composition (basic and acidic residues); sequence SKEKSETEKETS. Thr-752 carries the phosphothreonine modification. 2 stretches are compositionally biased toward basic and acidic residues: residues 764–774 and 789–821; these read HIDKCREESSK and SKGD…KESS. Residues 822 to 839 show a composition bias toward polar residues; it reads KSLVRQGSFTIDKPSSNI. Residues Ser-829, Ser-870, and Ser-872 each carry the phosphoserine modification. The tract at residues 844–1588 is targeting to microtubules; the sequence is IPHINKQNSS…GEEEDVTVHE (745 aa). Over residues 899–908 the composition is skewed to basic and acidic residues; it reads LREDNNKTDE. Disordered stretches follow at residues 899-1222 and 1228-1247; these read LRED…RWRR and ASTS…HTRL. A phosphothreonine mark is found at Thr-906 and Thr-912. Residues 913–937 show a composition bias toward polar residues; the sequence is PSYNRDNSISPESDVDTASTISLVT. Residues Ser-922, Ser-925, and Ser-950 each carry the phosphoserine modification. Basic and acidic residues predominate over residues 967 to 980; sequence DVTKSGSREKIEKK. Ser-1008 is subject to Phosphoserine. The residue at position 1012 (Thr-1012) is a Phosphothreonine. The span at 1028-1038 shows a compositional bias: polar residues; the sequence is IMSSDQETYSC. Thr-1047 carries the phosphothreonine modification. Position 1048 is a phosphoserine (Ser-1048). Residues 1049–1062 show a composition bias toward basic and acidic residues; that stretch reads ADEHNIHSKLEGGK. Low complexity predominate over residues 1075 to 1093; the sequence is STSKSTTLPRPRPTRTSLL. 7 positions are modified to phosphoserine: Ser-1102, Ser-1104, Ser-1122, Ser-1123, Ser-1135, Ser-1150, and Ser-1155. The targeting to centrosomes stretch occupies residues 1103–1588; that stretch reads DSELADADKA…GEEEDVTVHE (486 aa). Over residues 1112-1128 the composition is skewed to low complexity; the sequence is ASVASEVSTTSSTSKPP. Residues 1158 to 1173 are compositionally biased toward low complexity; the sequence is EATISRSSASARTAEA. Ser-1188, Ser-1195, Ser-1200, Ser-1229, Ser-1231, Ser-1241, Ser-1260, and Ser-1270 each carry phosphoserine. A compositionally biased stretch (polar residues) spans 1191 to 1218; that stretch reads TRANSISRLSDSKVKSMSSTHGSPSVNS. The interval 1315–1334 is disordered; that stretch reads SVTSSGTAPSTTVSTAATTP. Ser-1362 carries the phosphoserine modification. The segment at 1370–1398 is disordered; the sequence is PLVHSKTPEGNNGRSVDSRPQPAEHPDHL. Residues 1467 to 1495 adopt a coiled-coil conformation; the sequence is KTSSMEISSILQELKRVEKQLQVINAMID. A disordered region spans residues 1511 to 1540; that stretch reads AILPSPPKQKSSPVNNHSSPSQTPALCPPE. Positions 1518–1534 are enriched in polar residues; it reads KQKSSPVNNHSSPSQTP. A phosphoserine mark is found at Ser-1521 and Ser-1522.

Belongs to the CEP170 family. As to quaternary structure, interacts with CCDC68 and CCDC120; leading to recruitment to centrosomes. Interacts with PLK1. Interacts with NIN. Interacts with FHDC1. Interacts with CCDC61. Interacts with TBK1; efficient complex formation may be dependent on the presence of CCDC61. In terms of processing, phosphorylated; probably by PLK1.

It is found in the cytoplasm. The protein localises to the cytoskeleton. Its subcellular location is the microtubule organizing center. It localises to the centrosome. The protein resides in the centriole. It is found in the spindle. In terms of biological role, plays a role in microtubule organization. Required for centriole subdistal appendage assembly. The polypeptide is Centrosomal protein of 170 kDa (Cep170) (Mus musculus (Mouse)).